Consider the following 82-residue polypeptide: Small ribosomal subunit protein bS18 (82 aa).

Belongs to the bacterial ribosomal protein bS18 family. As to quaternary structure, part of the 30S ribosomal subunit. Forms a tight heterodimer with protein bS6.

Binds as a heterodimer with protein bS6 to the central domain of the 16S rRNA, where it helps stabilize the platform of the 30S subunit. In Sinorhizobium fredii (strain NBRC 101917 / NGR234), this protein is Small ribosomal subunit protein bS18.